Reading from the N-terminus, the 255-residue chain is 5-oxoprolinase subunit A 1 (255 aa).

Belongs to the LamB/PxpA family. Forms a complex composed of PxpA, PxpB and PxpC.

It carries out the reaction 5-oxo-L-proline + ATP + 2 H2O = L-glutamate + ADP + phosphate + H(+). Functionally, catalyzes the cleavage of 5-oxoproline to form L-glutamate coupled to the hydrolysis of ATP to ADP and inorganic phosphate. The sequence is that of 5-oxoprolinase subunit A 1 from Agrobacterium fabrum (strain C58 / ATCC 33970) (Agrobacterium tumefaciens (strain C58)).